We begin with the raw amino-acid sequence, 397 residues long: Troponin T, skeletal muscle (397 aa).

Residues 1–16 (MSDDEEYTSSEEEEVV) are compositionally biased toward acidic residues. Disordered regions lie at residues 1–148 (MSDD…NFTI), 234–261 (ERQK…YPPK), and 294–397 (DSNE…EEEE). Composition is skewed to basic and acidic residues over residues 37-77 (EFIK…LKEK), 84-129 (TRAE…EKKR), and 136-148 (MKDK…NFTI). Composition is skewed to basic and acidic residues over residues 294–307 (DSNE…KEQY) and 319–329 (FGERPGKKAGE). A compositionally biased stretch (acidic residues) spans 331 to 397 (ETPEGEEDAK…EEEEEEEEEE (67 aa)).

The protein belongs to the troponin T family. Post-translationally, some glutamate residues are polyglycylated by TTLL3B. This modification occurs exclusively on glutamate residues and results in polyglycine chains on the gamma-carboxyl group. Isoform 3 is expressed in the hypoderm. Isoform 8 is expressed in the dorsal vessel. Isoform 6 is expressed in adult TDT muscle and isoform 9 in adult IFM, flight and jump muscles.

Functionally, troponin T is the tropomyosin-binding subunit of troponin, the thin filament regulatory complex which confers calcium-sensitivity to striated muscle actomyosin ATPase activity. This is Troponin T, skeletal muscle (up) from Drosophila melanogaster (Fruit fly).